The chain runs to 618 residues: MSSIEEQITKSDSDFIISEDQSYLSKEKKADGSATINTADEQSSTDELQKSMSTGVLVNGDLYPSPTEEELATLPRVCGTIPWKAFIIIIVELCERFAYYGLTVPFQNYMQFGPKDATPGALNLGESGADGLSNFFTFWCYVTPVGAALIADQFLGRYNTIVCSAVIYFIGILILTCTAIPSVIDAGKSMGGFVVSLIIIGLGTGGIKSNVSPLMAEQLPKIPPYVKTKKNGSKVIVDPVVTTSRAYMIFYWSINVGSLSVLATTSLESTKGFVYAYLLPLCVFVIPLIILAVSKRFYKHTPPSGSIFVRVGQVFFLAAQNKFNLEKTKPSCTTTVGRVTLKDQWDDLFIDELKRALRACKTFLFYPIYWVCYGQMTNNLISQAGQMQTGNVSNDLFQAFDSIALIIFIPICDNIIYPLLRKYNIPFKPILRITLGFMFATASMIYAAVLQAKIYQRGPCYANFTDTCVSNDISVWIQIPAYVLIAFSEIFASITGLEFAFTKAPPSMKSIITALFLFTNAFGAILSICISSTAVNPKLTWMYTGIAVTAFIAGIMFWVCFHHYDAMEDEQNQLEFKRNDALTKKDVEKEVHDSYSMADESQYNLEKATAEEEIMKST.

The residue at position 22 (Ser-22) is a Phosphoserine. Phosphotyrosine is present on Tyr-23. Ser-25 and Ser-33 each carry phosphoserine. The disordered stretch occupies residues 26-50 (KEKKADGSATINTADEQSSTDELQK). The segment covering 34–50 (ATINTADEQSSTDELQK) has biased composition (polar residues). At Thr-35 the chain carries Phosphothreonine. Ser-44 bears the Phosphoserine mark. Phosphothreonine is present on Thr-45. Phosphoserine is present on residues Ser-51 and Ser-53. Thr-54 carries the phosphothreonine modification. 10 consecutive transmembrane segments (helical) span residues 131–151 (GLSN…ALIA), 161–181 (IVCS…TAIP), 187–207 (GKSM…TGGI), 247–267 (YMIF…TTSL), 273–293 (FVYA…ILAV), 400–420 (FDSI…YPLL), 430–450 (ILRI…AAVL), 475–495 (VWIQ…ASIT), 510–530 (SIIT…SICI), and 541–561 (WMYT…WVCF). Ser-594 carries the phosphoserine modification. Thr-618 bears the Phosphothreonine mark.

It belongs to the major facilitator superfamily. Proton-dependent oligopeptide transporter (POT/PTR) (TC 2.A.17) family.

The protein localises to the membrane. Its function is as follows. Uptake of small peptides. This Schizosaccharomyces pombe (strain 972 / ATCC 24843) (Fission yeast) protein is Probable peptide transporter ptr2 (ptr2).